Here is a 1123-residue protein sequence, read N- to C-terminus: Polyprotein of EF-Ts, chloroplastic (1123 aa).

The transit peptide at 1–73 (MTPVVHCSVG…SSARRPRTLS (73 aa)) directs the protein to the chloroplast. The segment at 68-141 (RPRTLSAATV…MPPLNDEDLV (74 aa)) is disordered. Over residues 94 to 103 (TSEESSEDTA) the composition is skewed to acidic residues. The segment covering 106-119 (TAEASEQAEASTSS) has biased composition (low complexity). Positions 143 to 212 (GASFTGKVRS…ETGRISLTMR (70 aa)) constitute an S1 motif 1 domain. The disordered stretch occupies residues 213–258 (TGGDYVKPKTETPKAASGGRNTTATTSRGSPRQTRERDEAKSMGET). Polar residues predominate over residues 231–244 (GRNTTATTSRGSPR). The segment covering 245 to 254 (QTRERDEAKS) has biased composition (basic and acidic residues). The S1 motif 2 domain maps to 263–331 (GQFLDGVVKN…VRGQVTLTMK (69 aa)). Disordered regions lie at residues 443 to 670 (KTES…SEKT) and 894 to 923 (VAAQ…EEKK). The span at 486-501 (EGSVTTEPTEAASTEF) shows a compositional bias: polar residues. A compositionally biased stretch (low complexity) spans 551 to 587 (SVASTESVTAVVEESAPVSSVAIEVPAPEASEASAQE). Positions 630-639 (KPDEPEESLI) are enriched in acidic residues. 2 stretches are compositionally biased toward low complexity: residues 657–670 (AAVP…SEKT) and 894–903 (VAAQTAAKAP). Residues 908-923 (PKDDKPEETAETEEKK) are compositionally biased toward basic and acidic residues.

This sequence belongs to the EF-Ts family. In terms of assembly, component of the chloroplast ribosome 30S and 70S subunits, as well as polysomes. As to quaternary structure, component of the chloroplast ribosome 70S subunit, and at low levels, present in polysomes. Associates transiently with chloroplast polysomes.

It localises to the plastid. Its subcellular location is the chloroplast. Its function is as follows. Associates with the EF-Tu.GDP complex and induces the exchange of GDP to GTP. It remains bound to the aminoacyl-tRNA.EF-Tu.GTP complex up to the GTP hydrolysis stage on the ribosome. In terms of biological role, binds to psbD and psbA 5'-untranslated regions (UTRs) in vitro. In Oryza sativa subsp. indica (Rice), this protein is Polyprotein of EF-Ts, chloroplastic.